A 397-amino-acid polypeptide reads, in one-letter code: Na(+)/H(+) antiporter NhaA 1 (397 aa).

12 helical membrane-spanning segments follow: residues 15 to 35, 42 to 62, 65 to 85, 101 to 121, 129 to 149, 160 to 180, 183 to 203, 219 to 241, 265 to 285, 299 to 319, 335 to 355, and 370 to 390; these read FQLEAASGLLLIAAAVLALII, YLYGGLLEVPVAVQVGALNIA, LLLWINDGLMALFFLLIGLEV, ILPATAAVGGMVVPALIYWFI, VAGWAIPTATDIAFALGVLAL, LFLMTLAIIDDLGAIIVIALF, GTLSSVSLLLAAACLLVLVAM, LILWVCVLKSGVHATLAGVALAF, WVAYAILPIFAFANAGVSLAG, ITIGLLLGKTVGVFGLTWVAV, ILGVAILCGIGFTMSLFVGSL, and MGILTGSFFAAVIGYAVTAMA.

Belongs to the NhaA Na(+)/H(+) (TC 2.A.33) antiporter family.

The protein resides in the cell inner membrane. It catalyses the reaction Na(+)(in) + 2 H(+)(out) = Na(+)(out) + 2 H(+)(in). Na(+)/H(+) antiporter that extrudes sodium in exchange for external protons. The chain is Na(+)/H(+) antiporter NhaA 1 from Pseudomonas putida (strain ATCC 47054 / DSM 6125 / CFBP 8728 / NCIMB 11950 / KT2440).